Here is a 22-residue protein sequence, read N- to C-terminus: Short-chain-enoyl-CoA hydratase (22 aa).

This sequence belongs to the enoyl-CoA hydratase/isomerase family.

It catalyses the reaction a short-chain (3S)-3-hydroxyacyl-CoA = a short-chain (2E)-enoyl-CoA + H2O. It participates in lipid metabolism; butanoate metabolism. The polypeptide is Short-chain-enoyl-CoA hydratase (crt) (Clostridium pasteurianum).